The following is a 120-amino-acid chain: Fumarate reductase subunit D (120 aa).

3 consecutive transmembrane segments (helical) span residues 25–45 (FAML…LGVI), 55–75 (VAGF…ISMP), and 100–120 (IACY…IFMI).

It belongs to the FrdD family. In terms of assembly, part of an enzyme complex containing four subunits: a flavoprotein (FrdA), an iron-sulfur protein (FrdB), and two hydrophobic anchor proteins (FrdC and FrdD).

It localises to the cell inner membrane. Functionally, anchors the catalytic components of the fumarate reductase complex to the cell membrane, binds quinones. The sequence is that of Fumarate reductase subunit D from Aliivibrio salmonicida (strain LFI1238) (Vibrio salmonicida (strain LFI1238)).